Consider the following 239-residue polypeptide: Uridylate kinase (239 aa).

Residue 13–16 (KLSG) participates in ATP binding. G55 contacts UMP. ATP is bound by residues G56 and R60. UMP-binding positions include D75 and 136–143 (TGNPFFTT). ATP-binding residues include T163, N164, Y169, and D172.

This sequence belongs to the UMP kinase family. In terms of assembly, homohexamer.

Its subcellular location is the cytoplasm. It carries out the reaction UMP + ATP = UDP + ADP. It participates in pyrimidine metabolism; CTP biosynthesis via de novo pathway; UDP from UMP (UMPK route): step 1/1. Its activity is regulated as follows. Inhibited by UTP. Its function is as follows. Catalyzes the reversible phosphorylation of UMP to UDP. The chain is Uridylate kinase from Neisseria gonorrhoeae (strain ATCC 700825 / FA 1090).